The chain runs to 188 residues: Photosystem I assembly protein Ycf4 (188 aa).

Helical transmembrane passes span 26–46 (YFWAIAVSVGGTGLLLAGLSS) and 68–88 (LVMGLYGIAAILLASYLWFVI).

The protein belongs to the Ycf4 family.

It localises to the cellular thylakoid membrane. Functionally, seems to be required for the assembly of the photosystem I complex. The polypeptide is Photosystem I assembly protein Ycf4 (Synechococcus elongatus (strain ATCC 33912 / PCC 7942 / FACHB-805) (Anacystis nidulans R2)).